The following is a 283-amino-acid chain: MPRAPAIARTLPSLRRALEGLRARRATVALVPTMGALHDGHLALVRQAKRRASKVVVSIFVNPTQFAPHEDFGSYPRTWKADMAKLAEARVDLVWNPDVGTMYPPDFATRILTEGPAMAGLEDRFRPHFFGGVATVVGKLFAQCRPDVALFGQKDYQQFKVVTRMATDLDLGVKIIGVPIVRERDGLAMSSRNAYLSAEQRAVAPTLHRVMKDAAKRLRNGDDLETVMADGAGTIVDAGFALDYFEARHAETLAPVRSIKDGPVRLLVAAKIGTTRLIDNIGV.

Residue 34–41 (MGALHDGH) coordinates ATP. The active-site Proton donor is H41. Q65 serves as a coordination point for (R)-pantoate. Q65 provides a ligand contact to beta-alanine. Residue 152–155 (GQKD) participates in ATP binding. A (R)-pantoate-binding site is contributed by Q158. Residues V181 and 189 to 192 (MSSR) each bind ATP.

The protein belongs to the pantothenate synthetase family. Homodimer.

Its subcellular location is the cytoplasm. It carries out the reaction (R)-pantoate + beta-alanine + ATP = (R)-pantothenate + AMP + diphosphate + H(+). The protein operates within cofactor biosynthesis; (R)-pantothenate biosynthesis; (R)-pantothenate from (R)-pantoate and beta-alanine: step 1/1. In terms of biological role, catalyzes the condensation of pantoate with beta-alanine in an ATP-dependent reaction via a pantoyl-adenylate intermediate. The sequence is that of Pantothenate synthetase from Nitrobacter hamburgensis (strain DSM 10229 / NCIMB 13809 / X14).